The chain runs to 428 residues: Aspartate--tRNA(Asp) ligase (428 aa).

L-aspartate is bound at residue Glu166. Positions 188–191 (QLYK) are aspartate. Arg210 lines the L-aspartate pocket. Residues 210-212 (RAE), 218-220 (RHL), and Glu351 each bind ATP. Mg(2+) is bound by residues Glu351 and Ser354. 2 residues coordinate L-aspartate: Ser354 and Arg358. Position 399–402 (399–402 (GLER)) interacts with ATP.

This sequence belongs to the class-II aminoacyl-tRNA synthetase family. Type 2 subfamily. Homodimer. The cofactor is Mg(2+).

The protein resides in the cytoplasm. The catalysed reaction is tRNA(Asp) + L-aspartate + ATP = L-aspartyl-tRNA(Asp) + AMP + diphosphate. Its function is as follows. Catalyzes the attachment of L-aspartate to tRNA(Asp) in a two-step reaction: L-aspartate is first activated by ATP to form Asp-AMP and then transferred to the acceptor end of tRNA(Asp). This chain is Aspartate--tRNA(Asp) ligase, found in Thermoplasma acidophilum (strain ATCC 25905 / DSM 1728 / JCM 9062 / NBRC 15155 / AMRC-C165).